Reading from the N-terminus, the 395-residue chain is Leucine aminopeptidase 1 (395 aa).

The first 19 residues, 1–19 (MKHLSLLALAAVAPTTALA), serve as a signal peptide directing secretion. Positions 20 to 95 (GVIDHQQVTF…SVKSFEQTKV (76 aa)) are excised as a propeptide. N-linked (GlcNAc...) asparagine glycosylation occurs at asparagine 187. Zn(2+) is bound by residues histidine 195, aspartate 214, glutamate 253, and aspartate 280. A disulfide bridge connects residues cysteine 329 and cysteine 333. Histidine 362 provides a ligand contact to Zn(2+).

The protein belongs to the peptidase M28 family. M28E subfamily. As to quaternary structure, monomer. The cofactor is Zn(2+).

Its subcellular location is the secreted. Extracellular aminopeptidase that allows assimilation of proteinaceous substrates. The chain is Leucine aminopeptidase 1 (LAP1) from Uncinocarpus reesii (strain UAMH 1704).